Consider the following 930-residue polypeptide: Probable outer membrane protein pmp8 (930 aa).

A signal peptide spans 1–26; the sequence is MKIPLHKLLISSTLVTPILLSIATYG. The Autotransporter domain maps to 636–930; the sequence is SIYQQRGLWA…NVDCGLRYSF (295 aa).

The protein belongs to the PMP outer membrane protein family.

It localises to the secreted. The protein localises to the cell wall. Its subcellular location is the cell outer membrane. In Chlamydia pneumoniae (Chlamydophila pneumoniae), this protein is Probable outer membrane protein pmp8 (pmp8).